The sequence spans 420 residues: 3-phosphoshikimate 1-carboxyvinyltransferase (420 aa).

Positions 1–24 (MTRTAKLTIIPPGRPLSGRAMPPG) are disordered. 3-phosphoshikimate contacts are provided by lysine 26, serine 27, and arginine 31. Phosphoenolpyruvate is bound at residue lysine 26. Glycine 97 and arginine 125 together coordinate phosphoenolpyruvate. 3-phosphoshikimate is bound by residues serine 170, serine 171, glutamine 172, aspartate 297, asparagine 320, and lysine 324. Residue glutamine 172 coordinates phosphoenolpyruvate. Residue aspartate 297 is the Proton acceptor of the active site. 3 residues coordinate phosphoenolpyruvate: arginine 328, arginine 375, and lysine 400.

Belongs to the EPSP synthase family. As to quaternary structure, monomer.

The protein resides in the cytoplasm. It carries out the reaction 3-phosphoshikimate + phosphoenolpyruvate = 5-O-(1-carboxyvinyl)-3-phosphoshikimate + phosphate. It participates in metabolic intermediate biosynthesis; chorismate biosynthesis; chorismate from D-erythrose 4-phosphate and phosphoenolpyruvate: step 6/7. Catalyzes the transfer of the enolpyruvyl moiety of phosphoenolpyruvate (PEP) to the 5-hydroxyl of shikimate-3-phosphate (S3P) to produce enolpyruvyl shikimate-3-phosphate and inorganic phosphate. The polypeptide is 3-phosphoshikimate 1-carboxyvinyltransferase (Rhizobium etli (strain CIAT 652)).